The following is a 261-amino-acid chain: Yop proteins translocation protein T (261 aa).

7 helical membrane passes run 20–40 (FMACFVILPVLSKQLLGGVLL), 44–64 (IVCSLALYVYPAVANQPYIEV), 77–97 (IILGLLIGFVATIPFWALESA), 131–151 (TLITIFFSGGAFLSLLSALFH), 180–200 (ILLIAAVLAAPLLIAMFLAEF), 214–234 (VFVLAMPIKSAIASLLLVIYC), and 239–259 (SHASKAMLLVMDPISLLIPVL).

It belongs to the FliR/MopE/SpaR family.

It localises to the cell membrane. In terms of biological role, component of the yop secretion machinery. The sequence is that of Yop proteins translocation protein T (yscT) from Yersinia pestis.